Reading from the N-terminus, the 421-residue chain is Serine--tRNA ligase (421 aa).

230–232 (TAE) is a binding site for L-serine. 259-261 (RRE) lines the ATP pocket. An L-serine-binding site is contributed by Glu282. Position 346-349 (346-349 (EISS)) interacts with ATP. Position 381 (Ser381) interacts with L-serine.

It belongs to the class-II aminoacyl-tRNA synthetase family. Type-1 seryl-tRNA synthetase subfamily. In terms of assembly, homodimer. The tRNA molecule binds across the dimer.

The protein resides in the cytoplasm. It carries out the reaction tRNA(Ser) + L-serine + ATP = L-seryl-tRNA(Ser) + AMP + diphosphate + H(+). The enzyme catalyses tRNA(Sec) + L-serine + ATP = L-seryl-tRNA(Sec) + AMP + diphosphate + H(+). The protein operates within aminoacyl-tRNA biosynthesis; selenocysteinyl-tRNA(Sec) biosynthesis; L-seryl-tRNA(Sec) from L-serine and tRNA(Sec): step 1/1. Its function is as follows. Catalyzes the attachment of serine to tRNA(Ser). Is also able to aminoacylate tRNA(Sec) with serine, to form the misacylated tRNA L-seryl-tRNA(Sec), which will be further converted into selenocysteinyl-tRNA(Sec). The chain is Serine--tRNA ligase from Acidithiobacillus ferrooxidans (strain ATCC 23270 / DSM 14882 / CIP 104768 / NCIMB 8455) (Ferrobacillus ferrooxidans (strain ATCC 23270)).